A 590-amino-acid polypeptide reads, in one-letter code: Beta-fructofuranosidase, insoluble isoenzyme CWINV2 (590 aa).

The N-terminal stretch at 1 to 25 is a signal peptide; it reads MSAPKFGYVLLLIVLINISNNGVDA. Residues 59–62, Gln78, and Trp86 each bind substrate; that span reads WIND. Residue Asp62 is part of the active site. Asn118 carries N-linked (GlcNAc...) asparagine glycosylation. 121 to 122 provides a ligand contact to substrate; that stretch reads WS. Asn143 and Asn180 each carry an N-linked (GlcNAc...) asparagine glycan. Substrate contacts are provided by residues 185–186, Glu241, and Asp275; that span reads RD. A glycan (N-linked (GlcNAc...) asparagine) is linked at Asn335. An intrachain disulfide couples Cys435 to Cys483. An N-linked (GlcNAc...) asparagine glycan is attached at Asn564.

This sequence belongs to the glycosyl hydrolase 32 family. As to expression, expressed in flowers, and seeds.

Its subcellular location is the secreted. It is found in the extracellular space. The protein localises to the apoplast. The protein resides in the cell wall. It catalyses the reaction Hydrolysis of terminal non-reducing beta-D-fructofuranoside residues in beta-D-fructofuranosides.. The protein is Beta-fructofuranosidase, insoluble isoenzyme CWINV2 (CWINV2) of Arabidopsis thaliana (Mouse-ear cress).